Reading from the N-terminus, the 134-residue chain is ATP synthase epsilon chain, chloroplastic (134 aa).

It belongs to the ATPase epsilon chain family. F-type ATPases have 2 components, CF(1) - the catalytic core - and CF(0) - the membrane proton channel. CF(1) has five subunits: alpha(3), beta(3), gamma(1), delta(1), epsilon(1). CF(0) has three main subunits: a, b and c.

The protein resides in the plastid. It localises to the chloroplast thylakoid membrane. Its function is as follows. Produces ATP from ADP in the presence of a proton gradient across the membrane. This chain is ATP synthase epsilon chain, chloroplastic, found in Gracilaria tenuistipitata var. liui (Red alga).